The primary structure comprises 207 residues: N-(5'-phosphoribosyl)anthranilate isomerase (207 aa).

Belongs to the TrpF family.

It carries out the reaction N-(5-phospho-beta-D-ribosyl)anthranilate = 1-(2-carboxyphenylamino)-1-deoxy-D-ribulose 5-phosphate. The protein operates within amino-acid biosynthesis; L-tryptophan biosynthesis; L-tryptophan from chorismate: step 3/5. The chain is N-(5'-phosphoribosyl)anthranilate isomerase from Legionella pneumophila subsp. pneumophila (strain Philadelphia 1 / ATCC 33152 / DSM 7513).